Here is a 150-residue protein sequence, read N- to C-terminus: MEVFIDADACPVRTEAFKVAERHRLIVHVVGNAPVPVPHNDPRVRRVIVPTTPDAADDWIAEHIGEGDICITADIPLAARCLKKGAKAIGTTGKAFTEDSIGMALSMRDLMRDLREAGAVSGGPASFAPKDRSRFLQALEEAIQAVKRGR.

The protein belongs to the UPF0178 family.

This Rhodospirillum rubrum (strain ATCC 11170 / ATH 1.1.1 / DSM 467 / LMG 4362 / NCIMB 8255 / S1) protein is UPF0178 protein Rru_A0086.